The following is a 602-amino-acid chain: Elongation factor 4 (602 aa).

The tr-type G domain occupies 2 to 184; it reads NHIRNFSIIA…AVVAKVPPPK (183 aa). Residues 14–19 and 131–134 contribute to the GTP site; these read DHGKST and NKMD.

It belongs to the TRAFAC class translation factor GTPase superfamily. Classic translation factor GTPase family. LepA subfamily.

The protein localises to the cell inner membrane. The enzyme catalyses GTP + H2O = GDP + phosphate + H(+). Functionally, required for accurate and efficient protein synthesis under certain stress conditions. May act as a fidelity factor of the translation reaction, by catalyzing a one-codon backward translocation of tRNAs on improperly translocated ribosomes. Back-translocation proceeds from a post-translocation (POST) complex to a pre-translocation (PRE) complex, thus giving elongation factor G a second chance to translocate the tRNAs correctly. Binds to ribosomes in a GTP-dependent manner. The sequence is that of Elongation factor 4 from Delftia acidovorans (strain DSM 14801 / SPH-1).